A 140-amino-acid polypeptide reads, in one-letter code: Nucleoside diphosphate kinase (140 aa).

ATP contacts are provided by K11, F59, R87, T93, R104, and N114. The active-site Pros-phosphohistidine intermediate is the H117.

The protein belongs to the NDK family. In terms of assembly, homotetramer. The cofactor is Mg(2+).

The protein localises to the cytoplasm. It catalyses the reaction a 2'-deoxyribonucleoside 5'-diphosphate + ATP = a 2'-deoxyribonucleoside 5'-triphosphate + ADP. The catalysed reaction is a ribonucleoside 5'-diphosphate + ATP = a ribonucleoside 5'-triphosphate + ADP. Major role in the synthesis of nucleoside triphosphates other than ATP. The ATP gamma phosphate is transferred to the NDP beta phosphate via a ping-pong mechanism, using a phosphorylated active-site intermediate. The sequence is that of Nucleoside diphosphate kinase from Rhodopseudomonas palustris (strain BisA53).